The following is a 628-amino-acid chain: Phosphomethylpyrimidine synthase (628 aa).

Residues Asn228, Met257, Tyr286, His322, 342-344, 383-386, and Glu422 each bind substrate; these read SRG and DGLR. His426 lines the Zn(2+) pocket. Tyr449 contributes to the substrate binding site. A Zn(2+)-binding site is contributed by His490. 3 residues coordinate [4Fe-4S] cluster: Cys570, Cys573, and Cys578.

It belongs to the ThiC family. As to quaternary structure, homodimer. The cofactor is [4Fe-4S] cluster.

The catalysed reaction is 5-amino-1-(5-phospho-beta-D-ribosyl)imidazole + S-adenosyl-L-methionine = 4-amino-2-methyl-5-(phosphooxymethyl)pyrimidine + CO + 5'-deoxyadenosine + formate + L-methionine + 3 H(+). The protein operates within cofactor biosynthesis; thiamine diphosphate biosynthesis. Functionally, catalyzes the synthesis of the hydroxymethylpyrimidine phosphate (HMP-P) moiety of thiamine from aminoimidazole ribotide (AIR) in a radical S-adenosyl-L-methionine (SAM)-dependent reaction. The sequence is that of Phosphomethylpyrimidine synthase from Methylibium petroleiphilum (strain ATCC BAA-1232 / LMG 22953 / PM1).